The primary structure comprises 418 residues: UDP-N-acetylglucosamine 1-carboxyvinyltransferase (418 aa).

22 to 23 (KN) contributes to the phosphoenolpyruvate binding site. UDP-N-acetyl-alpha-D-glucosamine is bound at residue arginine 92. Residue cysteine 116 is the Proton donor of the active site. Cysteine 116 carries the post-translational modification 2-(S-cysteinyl)pyruvic acid O-phosphothioketal. UDP-N-acetyl-alpha-D-glucosamine-binding positions include 121–125 (RPIDL), aspartate 305, and leucine 327.

This sequence belongs to the EPSP synthase family. MurA subfamily.

It localises to the cytoplasm. It catalyses the reaction phosphoenolpyruvate + UDP-N-acetyl-alpha-D-glucosamine = UDP-N-acetyl-3-O-(1-carboxyvinyl)-alpha-D-glucosamine + phosphate. It participates in cell wall biogenesis; peptidoglycan biosynthesis. In terms of biological role, cell wall formation. Adds enolpyruvyl to UDP-N-acetylglucosamine. The sequence is that of UDP-N-acetylglucosamine 1-carboxyvinyltransferase from Campylobacter jejuni subsp. jejuni serotype O:23/36 (strain 81-176).